The chain runs to 480 residues: DnaJ homolog subfamily A member 3, mitochondrial (480 aa).

R58 is modified (omega-N-methylarginine; by CARM1). The 66-residue stretch at 93–158 folds into the J domain; it reads DYYQILGVPR…VKRKQYDAYG (66 aa). An N6-acetyllysine modification is found at K134. The CR-type zinc finger occupies 223–301; sequence GVNKEFTVNI…CRGAGQAKQK (79 aa). C236 provides a ligand contact to Zn(2+). CXXCXGXG motif repeat units lie at residues 236 to 243, 253 to 260, 275 to 282, and 289 to 296; these read CERCDGKG, CHYCGGSG, CRRCGGRG, and CVVCRGAG. R238 is modified (omega-N-methylarginine; by CARM1). 7 residues coordinate Zn(2+): C239, C253, C256, C275, C278, C289, and C292. R293 is modified (omega-N-methylarginine; by CARM1). S398 carries the post-translational modification Phosphoserine. Residues 437 to 468 are disordered; sequence TVNGVTHTSTGGRTMDSSAGSKDRREAGEDNE. The segment covering 439–456 has biased composition (polar residues); sequence NGVTHTSTGGRTMDSSAG.

As to quaternary structure, interacts with JAK2, HSPA9B and IFN-gammaR2 chain. Interacts with Ras GTPase-activating protein 1 (RASA1). Isoform 2 interacts with MUSK (via the cytoplasmic domain). Tyrosine phosphorylated.

It is found in the mitochondrion matrix. Its subcellular location is the cytoplasm. The protein resides in the cytosol. It localises to the postsynaptic cell membrane. Modulates apoptotic signal transduction or effector structures within the mitochondrial matrix. Affect cytochrome C release from the mitochondria and caspase 3 activation, but not caspase 8 activation. Isoform 1 increases apoptosis triggered by both TNF and the DNA-damaging agent mytomycin C; in sharp contrast, isoform 2 suppresses apoptosis. Can modulate IFN-gamma-mediated transcriptional activity. Isoform 2 may play a role in neuromuscular junction development as an effector of the MUSK signaling pathway. This is DnaJ homolog subfamily A member 3, mitochondrial (Dnaja3) from Mus musculus (Mouse).